The following is a 218-amino-acid chain: Adenylate kinase (218 aa).

10–15 is a binding site for ATP; the sequence is GAGKGT. The interval 30–59 is NMP; that stretch reads STGDMLRAAVKAGTPLGLEAKKVMDAGGLV. AMP-binding positions include T31, R36, 57–59, 85–88, and Q92; these read GLV and GFPR. Positions 122–159 are LID; the sequence is GRRVHPASGRSYHVRFNPPKAEGVDDVTGEPLVQRDDD. ATP contacts are provided by residues R123 and 132–133; that span reads SY. AMP contacts are provided by R156 and R167. G203 lines the ATP pocket.

The protein belongs to the adenylate kinase family. In terms of assembly, monomer.

The protein resides in the cytoplasm. The enzyme catalyses AMP + ATP = 2 ADP. Its pathway is purine metabolism; AMP biosynthesis via salvage pathway; AMP from ADP: step 1/1. Functionally, catalyzes the reversible transfer of the terminal phosphate group between ATP and AMP. Plays an important role in cellular energy homeostasis and in adenine nucleotide metabolism. The sequence is that of Adenylate kinase from Bordetella bronchiseptica (strain ATCC BAA-588 / NCTC 13252 / RB50) (Alcaligenes bronchisepticus).